A 991-amino-acid chain; its full sequence is Valine--tRNA ligase (991 aa).

The 'HIGH' region motif lies at 43–53 (PNVTGTLHMGH). The 'KMSKS' region motif lies at 582–586 (KMSKS). Lys-585 lines the ATP pocket. The interval 689–711 (AHSPAQHQAGQDGQDAPRTPQPR) is disordered. The span at 693 to 704 (AQHQAGQDGQDA) shows a compositional bias: low complexity. Positions 925-988 (LIDVDAERAR…TQLNGLRERR (64 aa)) form a coiled coil.

Belongs to the class-I aminoacyl-tRNA synthetase family. ValS type 1 subfamily. In terms of assembly, monomer.

It localises to the cytoplasm. The enzyme catalyses tRNA(Val) + L-valine + ATP = L-valyl-tRNA(Val) + AMP + diphosphate. Its function is as follows. Catalyzes the attachment of valine to tRNA(Val). As ValRS can inadvertently accommodate and process structurally similar amino acids such as threonine, to avoid such errors, it has a 'posttransfer' editing activity that hydrolyzes mischarged Thr-tRNA(Val) in a tRNA-dependent manner. The polypeptide is Valine--tRNA ligase (Xylella fastidiosa (strain M12)).